The chain runs to 2082 residues: Polyketide synthase ThaQ (2082 aa).

The interval 398–468 (NDARRAGSAR…DSAHDSAHAA (71 aa)) is disordered. 3 stretches are compositionally biased toward basic and acidic residues: residues 399–411 (DARR…RDAR), 419–430 (HGARHEAAHDAQ), and 439–468 (ADAH…AHAA). Residues 470–546 (ALRREGRAYL…ALLDHLLAAH (77 aa)) form the Carrier 1 domain. Position 507 is an O-(pantetheine 4'-phosphoryl)serine (Ser-507). 2 stretches are compositionally biased toward low complexity: residues 560-582 (APAR…RAAP) and 593-605 (DTPS…APAR). The interval 560–655 (APARGVGARA…RYAPRAPHPD (96 aa)) is disordered. Residues 606-631 (PDQPAPSGPPAQPAQPAPRADTPPPA) are compositionally biased toward pro residues. One can recognise a Ketosynthase family 3 (KS3) domain in the interval 658-1077 (AEPVAIIGIS…GVNAHVVLEE (420 aa)). Disordered regions lie at residues 1250–1269 (APGT…EAAE) and 1603–1653 (ARGP…VKSD). Low complexity-rich tracts occupy residues 1256–1269 (ASAG…EAAE) and 1612–1624 (SPDA…RAQA). Residues 1640–1653 (ADSKAGPKSEVKSD) show a composition bias toward basic and acidic residues. One can recognise a Carrier 2 domain in the interval 1669–1743 (ASVAASVEDA…ALVRAVAEAV (75 aa)). O-(pantetheine 4'-phosphoryl)serine is present on Ser-1703. The 231-residue stretch at 1792-2022 (PRVVLIPGLG…GAGHAVFLTH (231 aa)) folds into the AB hydrolase-1 domain. The span at 2045–2067 (GAAESVESVEATEAAEAARSPAV) shows a compositional bias: low complexity. The tract at residues 2045–2082 (GAAESVESVEATEAAEAARSPAVARRRATDDAPVGSDA) is disordered.

Pantetheine 4'-phosphate serves as cofactor.

It localises to the cytoplasm. Its pathway is antibiotic biosynthesis. In terms of biological role, involved in production of the polyketide antibiotic thailandamide. The sequence is that of Polyketide synthase ThaQ from Burkholderia thailandensis (strain ATCC 700388 / DSM 13276 / CCUG 48851 / CIP 106301 / E264).